The chain runs to 100 residues: Small ribosomal subunit protein bS6 (100 aa).

Belongs to the bacterial ribosomal protein bS6 family.

In terms of biological role, binds together with bS18 to 16S ribosomal RNA. This chain is Small ribosomal subunit protein bS6, found in Tropheryma whipplei (strain TW08/27) (Whipple's bacillus).